Here is a 174-residue protein sequence, read N- to C-terminus: MTLILGIDPGSRITGYGVVRQTARGCEYVASGCIRTGSGELHERLQIVFRGVSEIIAQHGPVTMGIERVFMARNADSALKLGQARGAAIVAAAEAGLEIAEYSATQVKQAVAGTGGANKEQVMMMVMHLLKLTQKPQIDASDALAIALCHAHTRSSLVPHGLTTARRRGGRLRL.

Catalysis depends on residues aspartate 8, glutamate 67, and aspartate 139. The Mg(2+) site is built by aspartate 8, glutamate 67, and aspartate 139.

This sequence belongs to the RuvC family. As to quaternary structure, homodimer which binds Holliday junction (HJ) DNA. The HJ becomes 2-fold symmetrical on binding to RuvC with unstacked arms; it has a different conformation from HJ DNA in complex with RuvA. In the full resolvosome a probable DNA-RuvA(4)-RuvB(12)-RuvC(2) complex forms which resolves the HJ. It depends on Mg(2+) as a cofactor.

The protein resides in the cytoplasm. It catalyses the reaction Endonucleolytic cleavage at a junction such as a reciprocal single-stranded crossover between two homologous DNA duplexes (Holliday junction).. The RuvA-RuvB-RuvC complex processes Holliday junction (HJ) DNA during genetic recombination and DNA repair. Endonuclease that resolves HJ intermediates. Cleaves cruciform DNA by making single-stranded nicks across the HJ at symmetrical positions within the homologous arms, yielding a 5'-phosphate and a 3'-hydroxyl group; requires a central core of homology in the junction. The consensus cleavage sequence is 5'-(A/T)TT(C/G)-3'. Cleavage occurs on the 3'-side of the TT dinucleotide at the point of strand exchange. HJ branch migration catalyzed by RuvA-RuvB allows RuvC to scan DNA until it finds its consensus sequence, where it cleaves and resolves the cruciform DNA. This chain is Crossover junction endodeoxyribonuclease RuvC, found in Pseudomonas putida (strain ATCC 47054 / DSM 6125 / CFBP 8728 / NCIMB 11950 / KT2440).